Here is a 425-residue protein sequence, read N- to C-terminus: Pleckstrin homology domain-containing family A member 2 (425 aa).

The PH 1 domain maps to glutamine 7–lysine 113. Residue lysine 141 forms a Glycyl lysine isopeptide (Lys-Gly) (interchain with G-Cter in SUMO2) linkage. Serine 184 carries the post-translational modification Phosphoserine. A PH 2 domain is found at proline 198–glutamine 298. Polar residues predominate over residues serine 310–leucine 331. A disordered region spans residues serine 310–valine 425. A phosphoserine mark is found at serine 314 and serine 349. Composition is skewed to basic and acidic residues over residues alanine 363–glutamate 375 and arginine 400–proline 410.

As to quaternary structure, binds MPDZ and PTPN13.

It is found in the cytoplasm. The protein resides in the cell membrane. The protein localises to the nucleus. Functionally, binds specifically to phosphatidylinositol 3,4-diphosphate (PtdIns3,4P2), but not to other phosphoinositides. May recruit other proteins to the plasma membrane. The polypeptide is Pleckstrin homology domain-containing family A member 2 (Plekha2) (Mus musculus (Mouse)).